A 352-amino-acid chain; its full sequence is Glucose-6-phosphatase catalytic subunit 1 (352 aa).

Residues 1 to 27 (MDLLHSWGVELAVYLQTRYGKYEGLFD) are Lumenal-facing. A helical membrane pass occupies residues 28-48 (LASTVADLHTTFFWLFPIWFH). At 49-56 (LRRDTALR) the chain is on the cytoplasmic side. The chain crosses the membrane as a helical span at residues 57 to 77 (LIWVAVIGDWLNLVLKWVLFG). Residues 78–113 (ERPYWWVHETKFYGAGPAPSLQQFPITCETGPGSPS) lie on the Lumenal side of the membrane. Arg79 is a substrate binding site. The helical transmembrane segment at 114–134 (GHAMGAAGVWYVMVTALLSIA) threads the bilayer. His115 serves as the catalytic Proton donor. Over 135–141 (REKQCPP) the chain is Cytoplasmic. The helical transmembrane segment at 142–162 (LLYRFLYIGLWMLMGLVELVV) threads the bilayer. Topologically, residues 163 to 166 (CISR) are lumenal. Position 166 (Arg166) interacts with substrate. A helical transmembrane segment spans residues 167–187 (VYMAAHFPHQVIAGIITGTLV). The Nucleophile role is filled by His172. The Cytoplasmic portion of the chain corresponds to 188 to 205 (AEVVSKEKWIYSASLKKY). The helical transmembrane segment at 206–226 (FLITLFLTSFAVGFYVLLKAL) threads the bilayer. Residues 227–256 (DVDLLWTMEKAQKWCIRPEWVHLDSAPFAS) lie on the Lumenal side of the membrane. Residues 257–276 (LLRNMGSLFGLGLGLHSPFY) traverse the membrane as a helical segment. At 277 to 289 (KTTKMRIMSAPLR) the chain is on the cytoplasmic side. A helical membrane pass occupies residues 290-310 (IGCIVISVSLLHLLDGWTFSP). Residues 311 to 324 (ENHMTFYALSFGKS) are Lumenal-facing. A helical membrane pass occupies residues 325–345 (AVALLIPTTLVPWALSKIYPV). Topologically, residues 346–352 (KTEGKNL) are cytoplasmic. The Prevents secretion from ER motif lies at 349 to 352 (GKNL).

It belongs to the glucose-6-phosphatase family.

It is found in the endoplasmic reticulum membrane. The enzyme catalyses D-glucose 6-phosphate + H2O = D-glucose + phosphate. It functions in the pathway carbohydrate biosynthesis; gluconeogenesis. Hydrolyzes glucose-6-phosphate to glucose in the endoplasmic reticulum. Forms with the glucose-6-phosphate transporter (SLC37A4/G6PT) the complex responsible for glucose production in the terminal step of glycogenolysis and gluconeogenesis. Hence, it is the key enzyme in homeostatic regulation of blood glucose levels. The sequence is that of Glucose-6-phosphatase catalytic subunit 1 (g6pc1) from Haplochromis nubilus (Blue Victoria mouthbrooder).